Here is a 195-residue protein sequence, read N- to C-terminus: dCTP deaminase (195 aa).

DCTP contacts are provided by residues 105–110, Asp-123, 131–133, Gln-152, Tyr-166, Lys-173, and Gln-177; these read RSSLGR and TLE. Glu-133 (proton donor/acceptor) is an active-site residue. Positions 159 to 195 are disordered; it reads KSPAERPYGAERGSKYQGQTGPQASRIQGDREFGGDQ. Basic and acidic residues predominate over residues 160–172; the sequence is SPAERPYGAERGS. Residues 174–184 show a composition bias toward polar residues; it reads YQGQTGPQASR. The segment covering 186–195 has biased composition (basic and acidic residues); the sequence is QGDREFGGDQ.

It belongs to the dCTP deaminase family. As to quaternary structure, homotrimer.

It carries out the reaction dCTP + H2O + H(+) = dUTP + NH4(+). Its pathway is pyrimidine metabolism; dUMP biosynthesis; dUMP from dCTP (dUTP route): step 1/2. Catalyzes the deamination of dCTP to dUTP. The chain is dCTP deaminase from Natronomonas pharaonis (strain ATCC 35678 / DSM 2160 / CIP 103997 / JCM 8858 / NBRC 14720 / NCIMB 2260 / Gabara) (Halobacterium pharaonis).